We begin with the raw amino-acid sequence, 344 residues long: Lipase chaperone (344 aa).

The helical transmembrane segment at 14–34 threads the bilayer; the sequence is AAIYGGVGLAAVAGVAMWSGA.

The protein belongs to the lipase chaperone family.

The protein localises to the cell inner membrane. In terms of biological role, may be involved in the folding of the extracellular lipase during its passage through the periplasm. This Burkholderia cenocepacia (strain ATCC BAA-245 / DSM 16553 / LMG 16656 / NCTC 13227 / J2315 / CF5610) (Burkholderia cepacia (strain J2315)) protein is Lipase chaperone.